The sequence spans 134 residues: Holo-[acyl-carrier-protein] synthase (134 aa).

D8 and E57 together coordinate Mg(2+).

The protein belongs to the P-Pant transferase superfamily. AcpS family. Mg(2+) is required as a cofactor.

Its subcellular location is the cytoplasm. It catalyses the reaction apo-[ACP] + CoA = holo-[ACP] + adenosine 3',5'-bisphosphate + H(+). Its function is as follows. Transfers the 4'-phosphopantetheine moiety from coenzyme A to a Ser of acyl-carrier-protein. This is Holo-[acyl-carrier-protein] synthase from Rhizobium etli (strain CIAT 652).